The chain runs to 196 residues: Large ribosomal subunit protein uL18 (196 aa).

The protein belongs to the universal ribosomal protein uL18 family. In terms of assembly, part of the 50S ribosomal subunit. Contacts the 5S and 23S rRNAs.

This is one of the proteins that bind and probably mediate the attachment of the 5S RNA into the large ribosomal subunit, where it forms part of the central protuberance. The protein is Large ribosomal subunit protein uL18 of Desulfurococcus amylolyticus (strain DSM 18924 / JCM 16383 / VKM B-2413 / 1221n) (Desulfurococcus kamchatkensis).